A 1305-amino-acid chain; its full sequence is Contactin-associated protein-like 5 (1305 aa).

Positions 1–22 are cleaved as a signal peptide; the sequence is MDSPALGAVALLLAGFWHLGLT. Positions 23–174 constitute an F5/8 type C domain; that stretch reads ATNYNCDGAL…IGLRVEVFGC (152 aa). Residues 23 to 1236 are Extracellular-facing; sequence ATNYNCDGAL…PLTNAVRSDS (1214 aa). Laminin G-like domains lie at 180–360 and 367–544; these read IADF…TFSC and PITF…IDLC. Disulfide bonds link Cys329–Cys360, Cys512–Cys544, Cys550–Cys561, Cys555–Cys570, and Cys572–Cys582. An EGF-like 1 domain is found at 546-583; sequence IKDRCLPNYCEHGGKCSQSWTTFYCDCNDTSYMGATCH. One can recognise a Fibrinogen C-terminal domain in the interval 584–790; it reads NSIYEQSCEA…LHCYGDRQFW (207 aa). Positions 791-956 constitute a Laminin G-like 3 domain; it reads NAASFNTEAS…KMTPGVKPGC (166 aa). 5 disulfides stabilise this stretch: Cys929-Cys956, Cys960-Cys973, Cys967-Cys982, Cys984-Cys994, and Cys1163-Cys1198. Positions 957-995 constitute an EGF-like 2 domain; sequence PGHCSSYGNLCHNGGKCVEKYNGYSCDCTSSAYEGPFCK. The 182-residue stretch at 1017 to 1198 folds into the Laminin G-like 4 domain; that stretch reads PVTKNASTSS…VKGSLTESSC (182 aa). A helical transmembrane segment spans residues 1237–1257; sequence AVIGGVIAVVIFIIFCIIAIM. Residues 1258–1305 are Cytoplasmic-facing; sequence SRFLYQHKQAHRSSQTKEKEYPENLESSFKADIDLQNTVSECKREYFI.

The protein belongs to the neurexin family. In terms of tissue distribution, expressed in brain.

Its subcellular location is the membrane. Functionally, may play a role in the correct development and proper functioning of the peripheral and central nervous system and be involved in cell adhesion and intercellular communication. The polypeptide is Contactin-associated protein-like 5 (CNTNAP5) (Gallus gallus (Chicken)).